A 183-amino-acid polypeptide reads, in one-letter code: uncharacterized protein (183 aa).

This is an uncharacterized protein from Homo sapiens (Human).